The chain runs to 2572 residues: Zinc finger homeobox protein 2 (2572 aa).

2 disordered regions span residues 1–107 (MATL…GLPP) and 343–425 (LSPP…ADDY). A compositionally biased stretch (low complexity) spans 8 to 36 (STTGTTPSPGHNAPSLPSDTFSSSTPSDP). 2 stretches are compositionally biased toward polar residues: residues 44-53 (ASSTSENMRS) and 389-398 (LNQSSPTSKE). 2 C2H2-type zinc fingers span residues 453–476 (LKCP…REKH) and 508–532 (YRCD…SDKH). Disordered regions lie at residues 537 to 566 (QGFQ…PKTK), 608 to 655 (LPPG…LRPD), and 675 to 710 (RKFP…SPPP). The span at 615-628 (PGPPPPPGATPTSP) shows a compositional bias: pro residues. The segment covering 696–705 (LLGSSSDSLP) has biased composition (low complexity). 2 consecutive C2H2-type zinc fingers follow at residues 821 to 845 (LRCN…GAAH) and 870 to 894 (YHCL…TPAH). Residues 929 to 974 (QLRTPGKAPVTPLAEPPTPEKDAQNKTEQLASEETENKTGPSRDSA) form a disordered region. The segment covering 954–974 (KTEQLASEETENKTGPSRDSA) has biased composition (polar residues). The C2H2-type 5 zinc-finger motif lies at 1009–1032 (YRCPLCQEQLVGRPALHFHLSHLH). The interval 1061–1171 (PTLSPLDNGQ…PAPADSRHPL (111 aa)) is disordered. Residues 1120-1132 (GQPPSPAPSPVPE) are compositionally biased toward pro residues. 2 consecutive C2H2-type zinc fingers follow at residues 1191–1217 (YKCT…SHLH) and 1248–1272 (FKCT…SVLH). Disordered regions lie at residues 1269 to 1325 (SVLH…FLSP), 1389 to 1408 (LPAA…LAER), and 1415 to 1434 (MAKE…LPNE). Basic and acidic residues predominate over residues 1279–1311 (TKTDSKIEGPERSQEEPKEGETEGEVGTEKKGP). The span at 1392–1401 (ATPPPPPQPP) shows a compositional bias: pro residues. A C2H2-type 8 zinc finger spans residues 1480–1503 (LACGACGKLFSNMLILKTHEEHVH). The interval 1528–1591 (PPLAEPPKPP…SSRGNLPPLV (64 aa)) is disordered. A DNA-binding region (homeobox 1) is located at residues 1595 to 1654 (RRFSRTKFTEFQTQALQSFFETSAYPKDGEVERLASLLGLASRVVVVWFQNARQKARKNA). The segment at 1670-1696 (SGCRRCHATFSCVFELVRHLKKCYDDQ) adopts a C2H2-type 9; degenerate zinc-finger fold. The segment covering 1696-1724 (QTLEEEEEEAERGEEEEEVEEEEVEEEQG) has biased composition (acidic residues). Disordered regions lie at residues 1696-1769 (QTLE…SPAH), 1820-1860 (AATS…DKRL), 1912-2065 (ERKG…GMGQ), 2268-2327 (VQTA…NDAL), and 2398-2431 (NALL…EAGE). Positions 1728 to 1738 (PAGPEGPLPEP) are enriched in pro residues. The C2H2-type 10 zinc-finger motif lies at 1769-1791 (HTCDQCAISFSSQDLLTSHRRLH). The homeobox 2 DNA-binding region spans 1857 to 1916 (DKRLRTTILPEQLEILYRWYMQDSNPTRKMLDCISEEVGLKKRVVQVWFQNTRARERKGQ). Positions 1925–1939 (PSPAVKPPATATPAS) are enriched in low complexity. Residues 1949–1963 (KVDDGTGREAPKREA) are compositionally biased toward basic and acidic residues. A compositionally biased stretch (pro residues) spans 1991-2004 (TPEPPLPLLPPPPP). The span at 2017 to 2044 (SPESEACSLSAGDLSDSSASSLAEPESP) shows a compositional bias: low complexity. Gly residues predominate over residues 2045-2061 (GAGGTSGGPGGGTGVPD). A DNA-binding region (homeobox 3) is located at residues 2065-2124 (QRRYRTQMSSLQLKIMKACYEAYRTPTMQECEVLGEEIGLPKRVIQVWFQNARAKEKKAK). Polar residues predominate over residues 2284-2293 (DQTNTSTAGT). Residues 2305–2315 (LGDKVSSERKP) show a composition bias toward basic and acidic residues. Residues 2402 to 2422 (QPPPQPPEPTATAPPKPPELP) show a composition bias toward pro residues. The segment at 2451-2471 (YLCRQCKMAFDGEAPATAHQR) adopts a C2H2-type 11; degenerate zinc-finger fold. The C2H2-type 12 zinc-finger motif lies at 2495–2519 (YHCLACEVLLSGREALASHLRSSAH). Positions 2551–2572 (EARLPHTDSNPKTTTTSTLLAL) are disordered. Residues 2563 to 2572 (TTTTSTLLAL) show a composition bias toward low complexity.

The protein localises to the nucleus. In terms of biological role, transcriptional regulator that is critical for the regulation of pain perception and processing of noxious stimuli. This is Zinc finger homeobox protein 2 (ZFHX2) from Homo sapiens (Human).